The following is a 164-amino-acid chain: UPF0561 protein C2orf68 homolog (164 aa).

Basic and acidic residues-rich tracts occupy residues 1-13 (MEVI…ESVK) and 35-49 (IARD…QAKE). The tract at residues 1-98 (MEVIRDGEGE…WNESSSGTEM (98 aa)) is disordered. Basic residues predominate over residues 50–64 (KQRRRHTNTPRRPRR).

The protein belongs to the UPF0561 family.

The sequence is that of UPF0561 protein C2orf68 homolog from Danio rerio (Zebrafish).